The primary structure comprises 365 residues: MAVMAPRTLLLLLLGALALTQTWAGSHSMRYFSTSVSRPGRGEPRFIAVGYVDDTQFVRFDSDAASQRMEPRAPWIEQEEPEYWDGETRKVKAHSQTDRVNLGTLRGYYNQSEAGSHTIQKMYGCDVGSDGRFLRGYQQDAYDGKDYIALNEDLRSWTAADMAAEITKRKWEAAHFAEQLRAYLEGECVEWLRRYLENGKETLQRTDAPKTHMTHHAVSDHEAILRCWALSFYPAEITLTWQRDGEDQTQDTELVETRPAGDGTFQKWAAVVVPSGQEQRYTCHVQHESLPKPLTLRWEPSSQPTIPIVGIIAGLVLFGAVIAGAVIAAVRWRRKSSDRKGGSYSQAASSDSAQGSDVSLTACKV.

Positions 1 to 24 (MAVMAPRTLLLLLLGALALTQTWA) are cleaved as a signal peptide. An alpha-1 region spans residues 25–114 (GSHSMRYFST…LRGYYNQSEA (90 aa)). The Extracellular portion of the chain corresponds to 25–308 (GSHSMRYFST…EPSSQPTIPI (284 aa)). Asn-110 carries N-linked (GlcNAc...) asparagine glycosylation. Positions 115 to 206 (GSHTIQKMYG…ENGKETLQRT (92 aa)) are alpha-2. 2 disulfide bridges follow: Cys-125-Cys-188 and Cys-227-Cys-283. Residues 207–298 (DAPKTHMTHH…SLPKPLTLRW (92 aa)) form an alpha-3 region. An Ig-like C1-type domain is found at 209 to 295 (PKTHMTHHAV…QHESLPKPLT (87 aa)). A connecting peptide region spans residues 299–308 (EPSSQPTIPI). Residues 309 to 332 (VGIIAGLVLFGAVIAGAVIAAVRW) form a helical membrane-spanning segment. Residues 333-365 (RRKSSDRKGGSYSQAASSDSAQGSDVSLTACKV) lie on the Cytoplasmic side of the membrane. Residues 338–365 (DRKGGSYSQAASSDSAQGSDVSLTACKV) form a disordered region. Residues 342–359 (GSYSQAASSDSAQGSDVS) show a composition bias toward low complexity. Ser-343 is modified (phosphoserine). At Tyr-344 the chain carries Phosphotyrosine. A phosphoserine mark is found at Ser-345, Ser-349, Ser-350, Ser-352, Ser-356, and Ser-359.

It belongs to the MHC class I family. As to quaternary structure, heterodimer of an alpha chain and a beta chain (beta-2-microglobulin).

Its subcellular location is the membrane. Involved in the presentation of foreign antigens to the immune system. This Gorilla gorilla gorilla (Western lowland gorilla) protein is Class I histocompatibility antigen, Gogo-A*0201 alpha chain.